The chain runs to 441 residues: Cysteine--tRNA ligase (441 aa).

C24 is a Zn(2+) binding site. A 'HIGH' region motif is present at residues 26–36 (PTVYNYIHIGN). C204, H230, and E234 together coordinate Zn(2+). The 'KMSKS' region motif lies at 262-266 (KMSKS). K265 provides a ligand contact to ATP.

Belongs to the class-I aminoacyl-tRNA synthetase family. Monomer. The cofactor is Zn(2+).

It is found in the cytoplasm. It catalyses the reaction tRNA(Cys) + L-cysteine + ATP = L-cysteinyl-tRNA(Cys) + AMP + diphosphate. In Mycoplasma mycoides subsp. mycoides SC (strain CCUG 32753 / NCTC 10114 / PG1), this protein is Cysteine--tRNA ligase.